An 896-amino-acid polypeptide reads, in one-letter code: Pentatricopeptide repeat-containing protein At5g03800 (896 aa).

17 PPR repeats span residues 113–143 (KTRL…LSSP), 144–178 (TVVS…GLVQ), 180–214 (NEYT…GFLN), 215–247 (SVFV…IPQR), 248–278 (DVAS…MNRV), 284–318 (DSFT…GLMQ), 319–349 (ELSV…MMAQ), 350–380 (DAVT…VTEK), 381–415 (NTIT…GVEL), 416–450 (TDFS…GTAF), 451–481 (NPCI…WPSN), 484–519 (SSKA…KLFL), 520–554 (DEVS…GYFS), 555–585 (DISL…MREH), 586–620 (DVIS…EIKP), 621–653 (DIIT…MKTI), and 659–689 (TTEH…MPVQ). The tract at residues 694-769 (VLRALLDSCR…HPAKSWIIHE (76 aa)) is type E motif. Residues 770–800 (NKIHSFHARDTSHPQEKDIYRGLEILIMECL) form a type E(+) motif region. The type DYW motif stretch occupies residues 801 to 896 (KVGYEPNTEY…NGKCSCRDLW (96 aa)).

The protein belongs to the PPR family. PCMP-H subfamily.

Functionally, may play a role in embryogenesis. This chain is Pentatricopeptide repeat-containing protein At5g03800 (EMB175), found in Arabidopsis thaliana (Mouse-ear cress).